Reading from the N-terminus, the 571-residue chain is ATP-dependent RNA helicase RhlB (571 aa).

A Q motif motif is present at residues 9–37; the sequence is VTFSSFDLHPALIAGLESAGFTRCTPIQA. One can recognise a Helicase ATP-binding domain in the interval 40–220; the sequence is LPVALPGGDV…YEHMNEPEKL (181 aa). 53 to 60 is a binding site for ATP; it reads AQTGTGKT. The DEAD box signature appears at 166 to 169; it reads DEAD. The Helicase C-terminal domain maps to 231–393; it reads RVRQRIYFPS…PVTSELLTPL (163 aa). Residues 391 to 558 form a disordered region; that stretch reads TPLPRAPRVP…KPSGSPSLLS (168 aa). Positions 402–411 are enriched in acidic residues; it reads EGEEADDDAG. Positions 419–432 are enriched in basic and acidic residues; that stretch reads REAREQRAAEEQRR. The span at 435–448 shows a compositional bias: gly residues; it reads GRGGPGGSRSGSGG. Over residues 449 to 460 the composition is skewed to basic and acidic residues; that stretch reads GRRDGAGADGKP. Low complexity predominate over residues 483-497; it reads VVAAVAAQAPSAGVA. The span at 503–512 shows a compositional bias: basic residues; the sequence is PRKRRRRRNG. Residues 539–558 show a composition bias toward low complexity; sequence VVAKPVRAAAKPSGSPSLLS.

It belongs to the DEAD box helicase family. RhlB subfamily. Component of the RNA degradosome, which is a multiprotein complex involved in RNA processing and mRNA degradation.

The protein resides in the cytoplasm. The enzyme catalyses ATP + H2O = ADP + phosphate + H(+). DEAD-box RNA helicase involved in RNA degradation. Has RNA-dependent ATPase activity and unwinds double-stranded RNA. This is ATP-dependent RNA helicase RhlB from Xanthomonas axonopodis pv. citri (strain 306).